Here is an 80-residue protein sequence, read N- to C-terminus: Large ribosomal subunit protein uL29 (80 aa).

This sequence belongs to the universal ribosomal protein uL29 family.

The chain is Large ribosomal subunit protein uL29 (rpmC) from Mycobacterium leprae (strain TN).